A 173-amino-acid chain; its full sequence is NADH-ubiquinone oxidoreductase chain 6 (173 aa).

Transmembrane regions (helical) follow at residues 24–44 (MSIM…TGTM), 49–69 (WLSY…FIYI), 80–100 (IKIN…TLMY), and 139–159 (PTVI…LAVV).

This sequence belongs to the complex I subunit 6 family.

The protein resides in the mitochondrion membrane. The enzyme catalyses a ubiquinone + NADH + 5 H(+)(in) = a ubiquinol + NAD(+) + 4 H(+)(out). Functionally, core subunit of the mitochondrial membrane respiratory chain NADH dehydrogenase (Complex I) that is believed to belong to the minimal assembly required for catalysis. Complex I functions in the transfer of electrons from NADH to the respiratory chain. The immediate electron acceptor for the enzyme is believed to be ubiquinone. The protein is NADH-ubiquinone oxidoreductase chain 6 (ND6) of Locusta migratoria (Migratory locust).